The primary structure comprises 86 residues: MAQKKGGGSTRNGRDSESKRLGVKVFGGQAINAGGIIIRQRGTRVHAGDNVGVGKDHTLFALVDGHVQFAVKGPAKKQHVSVVPAA.

The span at 1–10 shows a compositional bias: gly residues; it reads MAQKKGGGST. A disordered region spans residues 1–21; it reads MAQKKGGGSTRNGRDSESKRL.

This sequence belongs to the bacterial ribosomal protein bL27 family.

This Cupriavidus pinatubonensis (strain JMP 134 / LMG 1197) (Cupriavidus necator (strain JMP 134)) protein is Large ribosomal subunit protein bL27.